Reading from the N-terminus, the 66-residue chain is Large ribosomal subunit protein bL35 (66 aa).

This sequence belongs to the bacterial ribosomal protein bL35 family.

This chain is Large ribosomal subunit protein bL35, found in Treponema denticola (strain ATCC 35405 / DSM 14222 / CIP 103919 / JCM 8153 / KCTC 15104).